A 58-amino-acid chain; its full sequence is Bowman-Birk type wound-induced trypsin inhibitor (58 aa).

7 disulfides stabilise this stretch: Cys4/Cys57, Cys5/Cys20, Cys8/Cys53, Cys10/Cys18, Cys27/Cys34, Cys31/Cys46, and Cys36/Cys44.

This sequence belongs to the Bowman-Birk serine protease inhibitor family.

This Medicago sativa (Alfalfa) protein is Bowman-Birk type wound-induced trypsin inhibitor.